A 115-amino-acid chain; its full sequence is Large ribosomal subunit protein bL19 (115 aa).

Belongs to the bacterial ribosomal protein bL19 family.

In terms of biological role, this protein is located at the 30S-50S ribosomal subunit interface and may play a role in the structure and function of the aminoacyl-tRNA binding site. The polypeptide is Large ribosomal subunit protein bL19 (Baumannia cicadellinicola subsp. Homalodisca coagulata).